The chain runs to 634 residues: MTVETDKQTLGFQTEVKQLLQLMIHSLYSNKEIFLRELVSNAADAADKLRFEALVKPELLEGSGELRIRVDYDKDARTVTIDDNGIGMSREEAVSHLGTIAKSGTADFLKHLSGDQKKDANLIGQFGVGFYSAFIVADQVDVYSRRAGLPASEGVHWSSRGEGEFEIASVDKPERGTRIVLHLKEGEESFADGWTLRGILKKYSDHIGLPIEMRKEHYGEAADKPAEPEWEAVNRASALWTRPKSEIKDEEYQEFYKHIAHDAGNPLAWSHNKVEGKLEYTSLLFVPGRAPFDLYHRDSAKGLKLYVQRVFIMDQAEQFLPLYLRFIKGVVDSSDLSLNVSREILQSGPVVDSMKSALTKRSLDMLEKLAKDKPDDYATFWRNFGQALKEGPAEDYANREKIAGLLRFSSTHDTTGAQSVGLADYVSRLAEGQDKLYYLTGESYAQIKDSPHLEVFRKKGIEVLLLTDRIDEWLMSYLTEFDGKSFVDVARGDLDLGKLDSEEDKKAQEDLAKSKEGLASRIKAALGDDVAEVRVSHRLTDSPAILAIGQGDLGLQMRQLLEASGQAVPESKPVFEFNPTHPLIEKLDAEQDMDRFGDLSRVLFDQAALAAGDSLKDPAAYVRRLNKLLLELSV.

The interval 1–342 (MTVETDKQTL…SSDLSLNVSR (342 aa)) is a; substrate-binding. Positions 343–559 (EILQSGPVVD…QGDLGLQMRQ (217 aa)) are b. Residues 560–634 (LLEASGQAVP…LNKLLLELSV (75 aa)) are c.

The protein belongs to the heat shock protein 90 family. In terms of assembly, homodimer.

Its subcellular location is the cytoplasm. Its function is as follows. Molecular chaperone. Has ATPase activity. This is Chaperone protein HtpG from Xanthomonas euvesicatoria pv. vesicatoria (strain 85-10) (Xanthomonas campestris pv. vesicatoria).